The chain runs to 314 residues: Tetraacyldisaccharide 4'-kinase (314 aa).

Position 54–61 (54–61 (YIGGTGKT)) interacts with ATP.

The protein belongs to the LpxK family.

It catalyses the reaction a lipid A disaccharide + ATP = a lipid IVA + ADP + H(+). The protein operates within glycolipid biosynthesis; lipid IV(A) biosynthesis; lipid IV(A) from (3R)-3-hydroxytetradecanoyl-[acyl-carrier-protein] and UDP-N-acetyl-alpha-D-glucosamine: step 6/6. Transfers the gamma-phosphate of ATP to the 4'-position of a tetraacyldisaccharide 1-phosphate intermediate (termed DS-1-P) to form tetraacyldisaccharide 1,4'-bis-phosphate (lipid IVA). This chain is Tetraacyldisaccharide 4'-kinase, found in Pelagibacter ubique (strain HTCC1062).